The chain runs to 287 residues: Pantothenate synthetase (287 aa).

30–37 (MGNLHSGH) contacts ATP. The active-site Proton donor is His37. Residue Gln61 participates in (R)-pantoate binding. Gln61 is a binding site for beta-alanine. 149–152 (GEKD) is an ATP binding site. Gln155 is a (R)-pantoate binding site. ATP-binding positions include Val178 and 186-189 (LSSR).

This sequence belongs to the pantothenate synthetase family. Homodimer.

The protein resides in the cytoplasm. It carries out the reaction (R)-pantoate + beta-alanine + ATP = (R)-pantothenate + AMP + diphosphate + H(+). Its pathway is cofactor biosynthesis; (R)-pantothenate biosynthesis; (R)-pantothenate from (R)-pantoate and beta-alanine: step 1/1. Its function is as follows. Catalyzes the condensation of pantoate with beta-alanine in an ATP-dependent reaction via a pantoyl-adenylate intermediate. This is Pantothenate synthetase from Pseudomonas putida (strain GB-1).